We begin with the raw amino-acid sequence, 325 residues long: Acetyl-coenzyme A carboxylase carboxyl transferase subunit alpha (325 aa).

Residues 35-292 form the CoA carboxyltransferase C-terminal domain; the sequence is EIEKLEARLT…DRVLRASLKQ (258 aa).

Belongs to the AccA family. In terms of assembly, acetyl-CoA carboxylase is a heterohexamer composed of biotin carboxyl carrier protein (AccB), biotin carboxylase (AccC) and two subunits each of ACCase subunit alpha (AccA) and ACCase subunit beta (AccD).

The protein localises to the cytoplasm. It catalyses the reaction N(6)-carboxybiotinyl-L-lysyl-[protein] + acetyl-CoA = N(6)-biotinyl-L-lysyl-[protein] + malonyl-CoA. It functions in the pathway lipid metabolism; malonyl-CoA biosynthesis; malonyl-CoA from acetyl-CoA: step 1/1. In terms of biological role, component of the acetyl coenzyme A carboxylase (ACC) complex. First, biotin carboxylase catalyzes the carboxylation of biotin on its carrier protein (BCCP) and then the CO(2) group is transferred by the carboxyltransferase to acetyl-CoA to form malonyl-CoA. This chain is Acetyl-coenzyme A carboxylase carboxyl transferase subunit alpha, found in Geobacillus thermodenitrificans (strain NG80-2).